A 367-amino-acid polypeptide reads, in one-letter code: HTH-type transcriptional regulator GbdR (367 aa).

The HTH araC/xylS-type domain maps to 227–325 (QEIVALMEAN…GIPPRDERQG (99 aa)). DNA-binding regions (H-T-H motif) lie at residues 244–265 (DELA…QKYL) and 292–315 (IIEV…REYF).

Specific regulator of choline metabolism, which activates transcription of at least 25 genes from 11 promoters in response to choline metabolites. Required for the induction of plcH, encoding the phospholipase C, and pchP, encoding the phosphorylcholine phosphatase, in response to glycine betaine (GB) and dimethylglycine (DMG). Also controls the expression of gbcAB and dgcAB, which are required for GB and DMG degradation, respectively, in response to both GB and DMG. The GbdR regulon also includes genes encoding sarcosine, glycine and serine catabolic enzymes, the BetX and CbcXWV quaternary amine transport proteins and the acetylcholine esterase gene, choE. Acts by binding directly to the promoter region of the genes. May play an important role during P.aeruginosa interactions with eukaryotes. This Pseudomonas aeruginosa (strain UCBPP-PA14) protein is HTH-type transcriptional regulator GbdR.